Here is a 24-residue protein sequence, read N- to C-terminus: Brevinin-1BYc (24 aa).

Cys-18 and Cys-24 are oxidised to a cystine.

Expressed by the skin glands.

The protein resides in the secreted. In terms of biological role, antibacterial activity against Gram-positive bacterium S.aureus. Weak antifungal activity against C.albicans. The polypeptide is Brevinin-1BYc (Rana boylii (Foothill yellow-legged frog)).